Here is a 317-residue protein sequence, read N- to C-terminus: Ribosomal RNA small subunit methyltransferase H (317 aa).

S-adenosyl-L-methionine contacts are provided by residues 39–41, D59, F83, D104, and Q111; that span reads GGH.

The protein belongs to the methyltransferase superfamily. RsmH family.

It localises to the cytoplasm. The catalysed reaction is cytidine(1402) in 16S rRNA + S-adenosyl-L-methionine = N(4)-methylcytidine(1402) in 16S rRNA + S-adenosyl-L-homocysteine + H(+). In terms of biological role, specifically methylates the N4 position of cytidine in position 1402 (C1402) of 16S rRNA. This Paraburkholderia phymatum (strain DSM 17167 / CIP 108236 / LMG 21445 / STM815) (Burkholderia phymatum) protein is Ribosomal RNA small subunit methyltransferase H.